The primary structure comprises 509 residues: ATP synthase subunit alpha (509 aa).

169–176 (GDRQTGKT) is an ATP binding site.

It belongs to the ATPase alpha/beta chains family. In terms of assembly, F-type ATPases have 2 components, CF(1) - the catalytic core - and CF(0) - the membrane proton channel. CF(1) has five subunits: alpha(3), beta(3), gamma(1), delta(1), epsilon(1). CF(0) has four main subunits: a(1), b(1), b'(1) and c(9-12).

It is found in the cell inner membrane. It carries out the reaction ATP + H2O + 4 H(+)(in) = ADP + phosphate + 5 H(+)(out). Its function is as follows. Produces ATP from ADP in the presence of a proton gradient across the membrane. The alpha chain is a regulatory subunit. This is ATP synthase subunit alpha from Bradyrhizobium sp. (strain BTAi1 / ATCC BAA-1182).